We begin with the raw amino-acid sequence, 358 residues long: 3-dehydroquinate synthase (358 aa).

NAD(+) is bound by residues 105 to 109 (GVVGD), 129 to 130 (TT), lysine 142, lysine 151, and 169 to 172 (TLKT). Positions 184, 245, and 262 each coordinate Zn(2+).

It belongs to the sugar phosphate cyclases superfamily. Dehydroquinate synthase family. NAD(+) is required as a cofactor. The cofactor is Co(2+). Zn(2+) serves as cofactor.

Its subcellular location is the cytoplasm. It catalyses the reaction 7-phospho-2-dehydro-3-deoxy-D-arabino-heptonate = 3-dehydroquinate + phosphate. Its pathway is metabolic intermediate biosynthesis; chorismate biosynthesis; chorismate from D-erythrose 4-phosphate and phosphoenolpyruvate: step 2/7. Functionally, catalyzes the conversion of 3-deoxy-D-arabino-heptulosonate 7-phosphate (DAHP) to dehydroquinate (DHQ). In Enterococcus faecalis (strain ATCC 700802 / V583), this protein is 3-dehydroquinate synthase.